Reading from the N-terminus, the 454-residue chain is Glycosyl hydrolase family 109 protein (454 aa).

A signal peptide (tat-type signal) is located at residues 1–29; the sequence is MFAMKRREFIAASAAVAASSLLPQTPAWA. Residues 43–44, Asp65, 116–119, 136–137, and Asn165 each bind NAD(+); these read MR, WEYH, and EV. Tyr194 is a substrate binding site. 224-228 is an NAD(+) binding site; that stretch reads SEARW. Residues Arg229, 241–244, and Tyr324 contribute to the substrate site; that span reads YPSH. NAD(+) is bound at residue Tyr241.

The protein belongs to the Gfo/Idh/MocA family. Glycosyl hydrolase 109 subfamily. NAD(+) is required as a cofactor. Predicted to be exported by the Tat system. The position of the signal peptide cleavage has not been experimentally proven.

Glycosidase. The chain is Glycosyl hydrolase family 109 protein from Stenotrophomonas maltophilia (strain K279a).